The chain runs to 214 residues: Octanoyltransferase (214 aa).

Positions 28–210 constitute a BPL/LPL catalytic domain; sequence GTAEDALYLL…EFGKVFTDTA (183 aa). Substrate contacts are provided by residues 73-80, 140-142, and 153-155; these read RGGNITCH, SIG, and GLS. Cys-171 functions as the Acyl-thioester intermediate in the catalytic mechanism.

This sequence belongs to the LipB family.

The protein localises to the cytoplasm. It catalyses the reaction octanoyl-[ACP] + L-lysyl-[protein] = N(6)-octanoyl-L-lysyl-[protein] + holo-[ACP] + H(+). It functions in the pathway protein modification; protein lipoylation via endogenous pathway; protein N(6)-(lipoyl)lysine from octanoyl-[acyl-carrier-protein]: step 1/2. In terms of biological role, catalyzes the transfer of endogenously produced octanoic acid from octanoyl-acyl-carrier-protein onto the lipoyl domains of lipoate-dependent enzymes. Lipoyl-ACP can also act as a substrate although octanoyl-ACP is likely to be the physiological substrate. This Maridesulfovibrio salexigens (strain ATCC 14822 / DSM 2638 / NCIMB 8403 / VKM B-1763) (Desulfovibrio salexigens) protein is Octanoyltransferase.